Reading from the N-terminus, the 619-residue chain is CREB-regulated transcription coactivator 3 (619 aa).

Residues 1–103 (MAASPGSGSA…LVERPSRNRF (103 aa)) form a required for interaction with HTLV-1 TAX region. Ser-4 and Ser-62 each carry phosphoserine. The segment at 103–150 (FHPLHRRSGDKPGRQFDGSAFGANYSSQPLDESWPRQQPPWKDEKHPG) is disordered. The residue at position 160 (Thr-160) is a Phosphothreonine. The residue at position 162 (Ser-162) is a Phosphoserine; by SIK2. Residues 165–175 (ALHTSALSTKP) are compositionally biased toward polar residues. Positions 165 to 185 (ALHTSALSTKPQDPYGGGGQS) are disordered. Residue Lys-232 forms a Glycyl lysine isopeptide (Lys-Gly) (interchain with G-Cter in SUMO2) linkage. Phosphoserine occurs at positions 273, 329, 332, 370, 391, 396, 410, and 443. The disordered stretch occupies residues 375-431 (STTNLSGPSRRRQPPVSPLTLSPGPEAHQGFSRQLSSTSPLAPYPTSQMVSSDRSQL). Positions 380–401 (SGPSRRRQPPVSPLTLSPGPEA) are required for interaction with PPP2CA and PPP2R1A. Positions 405-431 (FSRQLSSTSPLAPYPTSQMVSSDRSQL) are enriched in polar residues.

It belongs to the TORC family. As to quaternary structure, binding, as a tetramer, through its N-terminal region, with the bZIP domain of CREB1 enhances recruitment of TAF4 to the promoter. 'Arg-314' in the bZIP domain of CREB1 is essential for this interaction. Interacts (when phosphorylated at Ser-162 and Se-273) with 14-3-3 proteins. Interacts with YWHAE. Interacts (when phosphorylated at Ser-391) with phosphatase PP2A catalytic subunit PPP2CA and regulatory subunits PPP2R1A and PPP2R2A. Interacts, via the N-terminal with the ankyrin repeats of BCL3, to form a complex with CREB1 on CRE and TxRE responsive elements and represses HTLV-1 LTR-mediated transcription. (Microbial infection) Interacts with HTLV-1 protein Tax; this interaction enhances tax transcriptional activity. Phosphorylation/dephosphorylation states of Ser-273 are required for regulating transduction of CREB activity. CRTCs/TORCs are inactive when phosphorylated, and active when dephosphorylated at this site. May be phosphorylated at Ser-391 by MAPK3/ERK1 and/or MAPK1/ERK2 or by some cyclin-dependent kinases such as CDK1,CDK2 or CDK5. Following adenylyl cyclase activation, dephosphorylated at Ser-162 and Ser-273 resulting in its dissociation from 14-3-3 proteins probably promoting CRTC3 translocation into the nucleus. Predominantly expressed in B and T lymphocytes. Highest levels in lung. Also expressed in brain, colon, heart, kidney, ovary, and prostate. Weak expression in liver, pancreas, muscle, small intestine, spleen and stomach.

Its subcellular location is the nucleus. It is found in the cytoplasm. Functionally, transcriptional coactivator for CREB1 which activates transcription through both consensus and variant cAMP response element (CRE) sites. Acts as a coactivator, in the SIK/TORC signaling pathway, being active when dephosphorylated and acts independently of CREB1 'Ser-133' phosphorylation. Enhances the interaction of CREB1 with TAF4. Regulates the expression of specific CREB-activated genes such as the steroidogenic gene, StAR. Potent coactivator of PPARGC1A and inducer of mitochondrial biogenesis in muscle cells. Also coactivator for TAX activation of the human T-cell leukemia virus type 1 (HTLV-1) long terminal repeats (LTR). The polypeptide is CREB-regulated transcription coactivator 3 (CRTC3) (Homo sapiens (Human)).